Here is a 287-residue protein sequence, read N- to C-terminus: Glycine--tRNA ligase alpha subunit (287 aa).

This sequence belongs to the class-II aminoacyl-tRNA synthetase family. Tetramer of two alpha and two beta subunits.

It is found in the cytoplasm. The enzyme catalyses tRNA(Gly) + glycine + ATP = glycyl-tRNA(Gly) + AMP + diphosphate. The polypeptide is Glycine--tRNA ligase alpha subunit (Campylobacter jejuni subsp. jejuni serotype O:6 (strain 81116 / NCTC 11828)).